A 100-amino-acid chain; its full sequence is NADH-quinone oxidoreductase subunit K (100 aa).

3 helical membrane-spanning segments follow: residues 4 to 24 (LSWY…GFVI), 29 to 49 (IVML…FASF), and 60 to 80 (IFVL…LAIV).

This sequence belongs to the complex I subunit 4L family. NDH-1 is composed of 14 different subunits. Subunits NuoA, H, J, K, L, M, N constitute the membrane sector of the complex.

Its subcellular location is the cell inner membrane. The enzyme catalyses a quinone + NADH + 5 H(+)(in) = a quinol + NAD(+) + 4 H(+)(out). Its function is as follows. NDH-1 shuttles electrons from NADH, via FMN and iron-sulfur (Fe-S) centers, to quinones in the respiratory chain. The immediate electron acceptor for the enzyme in this species is believed to be ubiquinone. Couples the redox reaction to proton translocation (for every two electrons transferred, four hydrogen ions are translocated across the cytoplasmic membrane), and thus conserves the redox energy in a proton gradient. This Thermodesulfovibrio yellowstonii (strain ATCC 51303 / DSM 11347 / YP87) protein is NADH-quinone oxidoreductase subunit K.